We begin with the raw amino-acid sequence, 281 residues long: NAD kinase (281 aa).

The active-site Proton acceptor is the Asp-61. NAD(+) is bound by residues 61–62 (DG), 134–135 (ND), Arg-145, Asp-164, 175–180 (TAYSLS), and Gln-234.

This sequence belongs to the NAD kinase family. It depends on a divalent metal cation as a cofactor.

Its subcellular location is the cytoplasm. The catalysed reaction is NAD(+) + ATP = ADP + NADP(+) + H(+). Involved in the regulation of the intracellular balance of NAD and NADP, and is a key enzyme in the biosynthesis of NADP. Catalyzes specifically the phosphorylation on 2'-hydroxyl of the adenosine moiety of NAD to yield NADP. The chain is NAD kinase from Clostridium botulinum (strain Kyoto / Type A2).